We begin with the raw amino-acid sequence, 195 residues long: MAFSVSSLMALVVISSSPVSSMSCDLPASLDLRKQETLRVLHQMETISPPSCLKHRTDFRFPQEQLDGRQFPEAQATSVLQEMLQQIVSLFHTERSSAAWNTTLLDRLLAGLHQQLEDLNTCLDEQTGEEESALGTVGPTLAVKRYFRRIRLYLTEKKYSDCAWEIVRVDIMRSFSSSANLQGRLGMKDGDLGSP.

An N-terminal signal peptide occupies residues 1–23 (MAFSVSSLMALVVISSSPVSSMS). 2 disulfide bridges follow: C24–C122 and C52–C162. Residue N101 is glycosylated (N-linked (GlcNAc...) asparagine).

This sequence belongs to the alpha/beta interferon family.

The protein resides in the secreted. This Equus caballus (Horse) protein is Interferon omega-1.